Consider the following 311-residue polypeptide: 33 kDa chaperonin (311 aa).

Cystine bridges form between cysteine 240–cysteine 242 and cysteine 273–cysteine 276.

It belongs to the HSP33 family. Post-translationally, under oxidizing conditions two disulfide bonds are formed involving the reactive cysteines. Under reducing conditions zinc is bound to the reactive cysteines and the protein is inactive.

The protein localises to the cytoplasm. In terms of biological role, redox regulated molecular chaperone. Protects both thermally unfolding and oxidatively damaged proteins from irreversible aggregation. Plays an important role in the bacterial defense system toward oxidative stress. This Trichodesmium erythraeum (strain IMS101) protein is 33 kDa chaperonin.